Here is a 753-residue protein sequence, read N- to C-terminus: Lysyl oxidase homolog 3 (753 aa).

The signal sequence occupies residues 1-25 (MRPVSVWQWSPWGLLLCLLCSSCLG). SRCR domains lie at 44-145 (FRLA…VICK) and 169-282 (VRIR…VSCV). Disulfide bonds link cysteine 70–cysteine 134, cysteine 83–cysteine 144, cysteine 114–cysteine 124, cysteine 201–cysteine 271, cysteine 214–cysteine 281, and cysteine 248–cysteine 258. Asparagine 111 is a glycosylation site (N-linked (GlcNAc...) asparagine). Asparagine 266 carries N-linked (GlcNAc...) asparagine glycosylation. The segment covering 290–302 (SSGQKKQQQSKPQ) has biased composition (low complexity). The interval 290-315 (SSGQKKQQQSKPQGEARVRLKGGAHP) is disordered. 2 consecutive SRCR domains span residues 307–407 (VRLK…VRCN) and 417–525 (IRLS…VICS). 11 disulfide bridges follow: cysteine 332–cysteine 396, cysteine 345–cysteine 406, cysteine 376–cysteine 386, cysteine 446–cysteine 511, cysteine 459–cysteine 524, cysteine 492–cysteine 502, cysteine 554–cysteine 560, cysteine 606–cysteine 654, cysteine 638–cysteine 644, cysteine 666–cysteine 676, and cysteine 713–cysteine 727. N-linked (GlcNAc...) asparagine glycans are attached at residues asparagine 390 and asparagine 481. Residues 529–732 (SDLLLHSALV…WVHNCHIGDA (204 aa)) form a lysyl-oxidase like region. The Cu cation site is built by histidine 607, histidine 609, and histidine 611. Residue asparagine 625 is glycosylated (N-linked (GlcNAc...) asparagine). The lysine tyrosylquinone (Lys-Tyr) cross-link spans 634 to 670 (KASFCLEDTECQEDVSKRYECANFGEQGITVGCWDLY). Position 670 is a 2',4',5'-topaquinone (tyrosine 670).

It belongs to the lysyl oxidase family. Interacts with STAT3. Cu cation serves as cofactor. It depends on lysine tyrosylquinone residue as a cofactor. Post-translationally, the lysine tyrosylquinone cross-link (LTQ) is generated by condensation of the epsilon-amino group of a lysine with a topaquinone produced by oxidation of tyrosine. Isoform 1: Predominantly detected in the heart, placenta, lung, and small intestine. Isoform 2: Highly detected in the kidney, pancreas, spleen, and thymus, and is absent in lung. In eye, present in all layers of corneas as well as in the limbus and conjunctiva (at protein level).

It is found in the secreted. The protein localises to the extracellular space. The protein resides in the cytoplasm. Its subcellular location is the nucleus. The enzyme catalyses L-lysyl-[protein] + O2 + H2O = (S)-2-amino-6-oxohexanoyl-[protein] + H2O2 + NH4(+). It catalyses the reaction N(6)-acetyl-L-lysyl-[protein] + O2 + H2O = acetamide + (S)-2-amino-6-oxohexanoyl-[protein] + H2O2. Its function is as follows. Protein-lysine 6-oxidase that mediates the oxidation of peptidyl lysine residues to allysine in target proteins. Catalyzes the post-translational oxidative deamination of peptidyl lysine residues in precursors of elastin and different types of collagens, a prerequisite in the formation of cross-links between collagens and elastin. Required for somite boundary formation by catalyzing oxidation of fibronectin (FN1), enhancing integrin signaling in myofibers and their adhesion to the myotendinous junction (MTJ). Acts as a regulator of inflammatory response by inhibiting differentiation of naive CD4(+) T-cells into T-helper Th17 or regulatory T-cells (Treg): acts by interacting with STAT3 in the nucleus and catalyzing both deacetylation and oxidation of lysine residues on STAT3, leading to disrupt STAT3 dimerization and inhibit STAT3 transcription activity. Oxidation of lysine residues to allysine on STAT3 preferentially takes place on lysine residues that are acetylated. Also able to catalyze deacetylation of lysine residues on STAT3. Functionally, shows protein-lysine 6-oxidase activity toward elastin and different types of collagens, with the highest activity toward collagen type VIII. In terms of biological role, shows protein-lysine 6-oxidase activity toward elastin and different types of collagens, with the highest activity toward collagen type IV. The sequence is that of Lysyl oxidase homolog 3 from Homo sapiens (Human).